A 137-amino-acid chain; its full sequence is Basic phospholipase A2 homolog MT1 (137 aa).

An N-terminal signal peptide occupies residues 1–16; the sequence is MRTLWIVALLLVGVEG. 7 cysteine pairs are disulfide-bonded: Cys42-Cys131, Cys44-Cys60, Cys59-Cys111, Cys65-Cys137, Cys66-Cys104, Cys73-Cys97, and Cys91-Cys102. Residues 121–133 form an important for membrane-damaging activities in eukaryotes and bacteria; heparin-binding region; sequence KKYKAYFKFKCKK.

This sequence belongs to the phospholipase A2 family. Group II subfamily. K49 sub-subfamily. As to quaternary structure, binds to heparin. Expressed by the venom gland.

The protein localises to the secreted. Its activity is regulated as follows. Heparin and wedelolactone inhibit the myotoxic activity. The PLA2 inhibitor, para-bromophenacyl bromide (BPB), inhibits the myotoxic activity. Snake venom phospholipase A2 homolog that lacks enzymatic activity. Has myotoxic activities. A model of myotoxic mechanism has been proposed: an apo Lys49-PLA2 is activated by the entrance of a hydrophobic molecule (e.g. fatty acid) at the hydrophobic channel of the protein leading to a reorientation of a monomer. This reorientation causes a transition between 'inactive' to 'active' states, causing alignment of C-terminal and membrane-docking sites (MDoS) side-by-side and putting the membrane-disruption sites (MDiS) in the same plane, exposed to solvent and in a symmetric position for both monomers. The MDoS region stabilizes the toxin on membrane by the interaction of charged residues with phospholipid head groups. Subsequently, the MDiS region destabilizes the membrane with penetration of hydrophobic residues. This insertion causes a disorganization of the membrane, allowing an uncontrolled influx of ions (i.e. calcium and sodium), and eventually triggering irreversible intracellular alterations and cell death. This is Basic phospholipase A2 homolog MT1 from Agkistrodon contortrix laticinctus (Broad-banded copperhead).